A 308-amino-acid polypeptide reads, in one-letter code: Sulfoquinovosyl glycerol transport system permease protein SmoG (308 aa).

6 helical membrane passes run 28 to 48 (LAVL…VYPV), 92 to 112 (VLIT…LALL), 126 to 146 (SLLI…AWFF), 164 to 184 (GIIW…TIIW), 223 to 243 (ITLP…TITA), and 279 to 299 (LGYG…VTAV). In terms of domain architecture, ABC transmembrane type-1 spans 88 to 300 (TWNTVLITLI…ALSMCVTAVY (213 aa)).

Belongs to the binding-protein-dependent transport system permease family. The complex is probably composed of two ATP-binding proteins (SmoE), two transmembrane proteins (SmoG and SmoH) and a solute-binding protein (SmoF).

Its subcellular location is the cell inner membrane. Functionally, part of the ABC transporter complex SmoEFGH involved in sulfoquinovosyl glycerol (SQGro) uptake. Responsible for the translocation of the substrate across the membrane. The sequence is that of Sulfoquinovosyl glycerol transport system permease protein SmoG from Agrobacterium fabrum (strain C58 / ATCC 33970) (Agrobacterium tumefaciens (strain C58)).